We begin with the raw amino-acid sequence, 258 residues long: UPF0246 protein YaaA (258 aa).

The protein belongs to the UPF0246 family.

In Escherichia coli O8 (strain IAI1), this protein is UPF0246 protein YaaA.